Here is a 508-residue protein sequence, read N- to C-terminus: Lysine--tRNA ligase (508 aa).

The Mg(2+) site is built by glutamate 418 and glutamate 425.

It belongs to the class-II aminoacyl-tRNA synthetase family. As to quaternary structure, homodimer. The cofactor is Mg(2+).

It localises to the cytoplasm. It catalyses the reaction tRNA(Lys) + L-lysine + ATP = L-lysyl-tRNA(Lys) + AMP + diphosphate. The protein is Lysine--tRNA ligase of Burkholderia multivorans (strain ATCC 17616 / 249).